The chain runs to 431 residues: Glutamate-1-semialdehyde 2,1-aminomutase (431 aa).

The residue at position 269 (Lys269) is an N6-(pyridoxal phosphate)lysine.

It belongs to the class-III pyridoxal-phosphate-dependent aminotransferase family. HemL subfamily. As to quaternary structure, homodimer. Requires pyridoxal 5'-phosphate as cofactor.

The protein localises to the cytoplasm. The catalysed reaction is (S)-4-amino-5-oxopentanoate = 5-aminolevulinate. It functions in the pathway porphyrin-containing compound metabolism; protoporphyrin-IX biosynthesis; 5-aminolevulinate from L-glutamyl-tRNA(Glu): step 2/2. The protein operates within porphyrin-containing compound metabolism; chlorophyll biosynthesis. The polypeptide is Glutamate-1-semialdehyde 2,1-aminomutase (Chlorobaculum tepidum (strain ATCC 49652 / DSM 12025 / NBRC 103806 / TLS) (Chlorobium tepidum)).